Consider the following 170-residue polypeptide: Inosine/xanthosine triphosphatase (170 aa).

This sequence belongs to the YjjX NTPase family. As to quaternary structure, homodimer. The cofactor is Mg(2+). It depends on Mn(2+) as a cofactor.

It carries out the reaction XTP + H2O = XDP + phosphate + H(+). It catalyses the reaction ITP + H2O = IDP + phosphate + H(+). In terms of biological role, phosphatase that hydrolyzes non-canonical purine nucleotides such as XTP and ITP to their respective diphosphate derivatives. Probably excludes non-canonical purines from DNA/RNA precursor pool, thus preventing their incorporation into DNA/RNA and avoiding chromosomal lesions. This chain is Inosine/xanthosine triphosphatase, found in Aliivibrio fischeri (strain MJ11) (Vibrio fischeri).